Here is a 29-residue protein sequence, read N- to C-terminus: GIFDKLKNFAKGVAQSLLNKASCKLSGQC.

A disulfide bridge connects residues cysteine 23 and cysteine 29.

It belongs to the frog skin active peptide (FSAP) family. Brevinin subfamily. Expressed by the skin glands.

Its subcellular location is the secreted. Shows antibacterial activity against representative Gram-negative and Gram-positive bacterial species, and hemolytic activity. This chain is Brevinin-2Ee, found in Pelophylax lessonae (Pool frog).